Reading from the N-terminus, the 447-residue chain is MGLPLMMERSSNNNNVELSRVAVSDTHGEDSPYFAGWKAYDENPYDESHNPSGVIQMGLAENQVSFDLLETYLEKKNPEGSMWGSKGAPGFRENALFQDYHGLKTFRQAMASFMEQIRGGKARFDPDRIVLTAGATAANELLTFILADPNDALLVPTPYYPGFDRDLRWRTGVKIVPIHCDSSNHFQITPEALESAYQTARDANIRVRGVLITNPSNPLGATVQKKVLEDLLDFCVRKNIHLVSDEIYSGSVFHASEFTSVAEIVENIDDVSVKERVHIVYSLSKDLGLPGFRVGTIYSYNDNVVRTARRMSSFTLVSSQTQHMLASMLSDEEFTEKYIRINRERLRRRYDTIVEGLKKAGIECLKGNAGLFCWMNLGFLLEKKTKDGELQLWDVILKELNLNISPGSSCHCSEVGWFRVCFANMSENTLEIALKRIHEFMDRRRRF.

The substrate site is built by E61 and Y100. K285 is subject to N6-(pyridoxal phosphate)lysine.

It belongs to the class-I pyridoxal-phosphate-dependent aminotransferase family. Homodimer and heterodimer. In vivo, the relevance of heterodimerization with other ACS enzymes is however unsure. Interacts with XBAT32. Pyridoxal 5'-phosphate serves as cofactor. In terms of processing, ubiquitinated by XBAT32. Ubiquitination probably leads to its subsequent degradation, thus controlling ethylene production. Expressed in roots.

It catalyses the reaction S-adenosyl-L-methionine = 1-aminocyclopropane-1-carboxylate + S-methyl-5'-thioadenosine + H(+). Its pathway is alkene biosynthesis; ethylene biosynthesis via S-adenosyl-L-methionine; ethylene from S-adenosyl-L-methionine: step 1/2. In terms of biological role, 1-aminocyclopropane-1-carboxylate synthase (ACS) enzymes catalyze the conversion of S-adenosyl-L-methionine (SAM) into 1-aminocyclopropane-1-carboxylate (ACC), a direct precursor of ethylene. This chain is 1-aminocyclopropane-1-carboxylate synthase 7 (ACS7), found in Arabidopsis thaliana (Mouse-ear cress).